Here is a 394-residue protein sequence, read N- to C-terminus: 1-deoxy-D-xylulose 5-phosphate reductoisomerase (394 aa).

NADPH is bound by residues T14, G15, S16, I17, G40, and N128. 1-deoxy-D-xylulose 5-phosphate is bound at residue K129. Residue E130 coordinates NADPH. Position 154 (D154) interacts with Mn(2+). 1-deoxy-D-xylulose 5-phosphate contacts are provided by S155, E156, S180, and H203. E156 is a binding site for Mn(2+). Residue G209 participates in NADPH binding. S216, N221, K222, and E225 together coordinate 1-deoxy-D-xylulose 5-phosphate. E225 contacts Mn(2+).

Belongs to the DXR family. Mg(2+) serves as cofactor. Requires Mn(2+) as cofactor.

The catalysed reaction is 2-C-methyl-D-erythritol 4-phosphate + NADP(+) = 1-deoxy-D-xylulose 5-phosphate + NADPH + H(+). Its pathway is isoprenoid biosynthesis; isopentenyl diphosphate biosynthesis via DXP pathway; isopentenyl diphosphate from 1-deoxy-D-xylulose 5-phosphate: step 1/6. Functionally, catalyzes the NADPH-dependent rearrangement and reduction of 1-deoxy-D-xylulose-5-phosphate (DXP) to 2-C-methyl-D-erythritol 4-phosphate (MEP). In Xylella fastidiosa (strain M23), this protein is 1-deoxy-D-xylulose 5-phosphate reductoisomerase.